The primary structure comprises 425 residues: UDP-N-acetylglucosamine 1-carboxyvinyltransferase (425 aa).

31–32 (KN) provides a ligand contact to phosphoenolpyruvate. Arg100 provides a ligand contact to UDP-N-acetyl-alpha-D-glucosamine. Cys124 functions as the Proton donor in the catalytic mechanism. Cys124 is subject to 2-(S-cysteinyl)pyruvic acid O-phosphothioketal. UDP-N-acetyl-alpha-D-glucosamine-binding positions include 129 to 133 (RPIDQ), 170 to 172 (TVT), Asp311, and Ile333.

Belongs to the EPSP synthase family. MurA subfamily.

The protein resides in the cytoplasm. It carries out the reaction phosphoenolpyruvate + UDP-N-acetyl-alpha-D-glucosamine = UDP-N-acetyl-3-O-(1-carboxyvinyl)-alpha-D-glucosamine + phosphate. It participates in cell wall biogenesis; peptidoglycan biosynthesis. Its function is as follows. Cell wall formation. Adds enolpyruvyl to UDP-N-acetylglucosamine. This Aquifex aeolicus (strain VF5) protein is UDP-N-acetylglucosamine 1-carboxyvinyltransferase.